Reading from the N-terminus, the 456-residue chain is Iroquois-class homeodomain protein irx-2 (456 aa).

A DNA-binding region (homeobox; TALE-type) is located at residues 110–172 (DPAYRKNATR…NARRRLKKEN (63 aa)). Disordered regions lie at residues 172-214 (NKMT…AEDE), 246-320 (CESG…PASK), and 434-456 (RPTN…QPYP). Composition is skewed to basic and acidic residues over residues 192–205 (GERV…KAQD) and 246–256 (CESGSESKEKY). Over residues 257-269 (DDDEDEEEGDEED) the composition is skewed to acidic residues. Polar residues predominate over residues 291–318 (NHQQDGSPRNSNKTSLDNGMSPSSQTPA).

The protein belongs to the TALE/IRO homeobox family. In terms of tissue distribution, expressed in the neural plate in overlapping patterns with other irx members, which all share an anterior border of expression. Also expressed in the placodes. Broadly expressed in the tailbud rhombencephalon (hindbrain). Outside the nervous system and at tailbud stages, expressed in the developing otic vesicle, branchial arches, prospective heart region and pronephros.

The protein resides in the nucleus. In terms of biological role, acts partially redundantly with other irx members in neural patterning. Required for formation of the posterior forebrain, midbrain, hindbrain, and to a lesser extent, spinal cord. Acts early in neural plate development to induce expression of some but not all proneural genes, and specify a neural precursor state. Also up-regulates repressors that prevent neuronal differentiation. Patterns the neuroectoderm in both the anterior/posterior and dorsal/ventral axes. Probably dispensable for pronephric kidney development. In Xenopus tropicalis (Western clawed frog), this protein is Iroquois-class homeodomain protein irx-2.